Consider the following 306-residue polypeptide: Putative transcriptional regulator (306 aa).

Residues 1-61 (MIKRNLNDLL…TRTTRSVSPT (61 aa)) enclose the HTH lysR-type domain. Residues 21 to 40 (FTRAAAQLGVTQSALSQSIS) constitute a DNA-binding region (H-T-H motif).

This sequence belongs to the LysR transcriptional regulatory family.

Functionally, may have a role in the regulation of oprD expression. The sequence is that of Putative transcriptional regulator from Pseudomonas aeruginosa (strain ATCC 15692 / DSM 22644 / CIP 104116 / JCM 14847 / LMG 12228 / 1C / PRS 101 / PAO1).